Here is a 130-residue protein sequence, read N- to C-terminus: Large ribosomal subunit protein bL12 (130 aa).

Belongs to the bacterial ribosomal protein bL12 family. In terms of assembly, homodimer. Part of the ribosomal stalk of the 50S ribosomal subunit. Forms a multimeric L10(L12)X complex, where L10 forms an elongated spine to which 2 to 4 L12 dimers bind in a sequential fashion. Binds GTP-bound translation factors.

Forms part of the ribosomal stalk which helps the ribosome interact with GTP-bound translation factors. Is thus essential for accurate translation. The polypeptide is Large ribosomal subunit protein bL12 (Mycobacterium bovis (strain ATCC BAA-935 / AF2122/97)).